The chain runs to 441 residues: MDQEIRSNNYDISVSTVEDTSFEAMDDSILEIIDDEAPEIQGKPKANISTHFRNMLAMFGNFLSLGFFLVIIVLVGIAFEIGGRFCGLILTLALEVYFFSTALLKLFGLRKIALTLHFFEPLLVFILLIIALNASPSIEQNKYASFLASAWNTALLHFTPLFNLLEGMASLLVVQALGHLSRWLVHNKSENWMFFILLNASSAISMSLYLLYRVSSFSISNPNALMIGFSLATVIVISIYGVASGRANLSEASLMFLYIAYTVYMVCTDFGNPNTSSLEKPKFDYLPPNILQSVHYLISTISATLPRTLYNIVLFMVAAAKTVAPSVFATFAFRISVMYAVTRILPAIQNNIIFLEYSRTSKQGMWSILSPCILIAVYTNLLLQHLYPTPSFTSPVNQILCSAEIWRWVSAILTLLLYAIELAYSKESDTGQALASHFKLD.

Helical transmembrane passes span 62 to 82 (FLSLGFFLVIIVLVGIAFEIG), 88 to 108 (LILTLALEVYFFSTALLKLFG), 112 to 132 (IALTLHFFEPLLVFILLIIAL), 154 to 174 (ALLHFTPLFNLLEGMASLLVV), 192 to 212 (WMFFILLNASSAISMSLYLLY), 224 to 244 (ALMIGFSLATVIVISIYGVAS), 247 to 267 (ANLSEASLMFLYIAYTVYMVC), 312 to 332 (IVLFMVAAAKTVAPSVFATFA), 335 to 355 (ISVMYAVTRILPAIQNNIIFL), 363 to 383 (QGMWSILSPCILIAVYTNLLL), and 399 to 419 (ILCSAEIWRWVSAILTLLLYA).

It is found in the membrane. This is an uncharacterized protein from Schizosaccharomyces pombe (strain 972 / ATCC 24843) (Fission yeast).